Consider the following 584-residue polypeptide: Tricyclene synthase 1e20, chloroplastic (584 aa).

A chloroplast-targeting transit peptide spans 1 to 45 (MIYIWICFYLQTTLLPCSLSTRTKFAICHNTSKLHRAAYKTSRWN). N-linked (GlcNAc...) asparagine glycosylation is found at Asn30, Asn209, and Asn322. Mg(2+) is bound by residues Asp341 and Asp345. Positions 341-345 (DDIFD) match the DDXXD motif motif. Residues Asn387 and Asn468 are each glycosylated (N-linked (GlcNAc...) asparagine). Residues Asn485, Ser489, and Glu493 each coordinate Mg(2+). Asn512 is a glycosylation site (N-linked (GlcNAc...) asparagine).

The protein belongs to the terpene synthase family. Tpsg subfamily. It depends on Mg(2+) as a cofactor. Mn(2+) serves as cofactor. In terms of tissue distribution, accumulates at low levels in flowers; mostly expressed in both upper and lower petal lobes, and, to a lower extent, in tube and stamens.

It is found in the plastid. Its subcellular location is the chloroplast stroma. The catalysed reaction is (2E)-geranyl diphosphate = tricyclene + diphosphate. It carries out the reaction (2E)-geranyl diphosphate = beta-myrcene + diphosphate. Its pathway is secondary metabolite biosynthesis; terpenoid biosynthesis. May contribute to floral scent emission. The sequence is that of Tricyclene synthase 1e20, chloroplastic (1e20) from Antirrhinum majus (Garden snapdragon).